A 54-amino-acid polypeptide reads, in one-letter code: ATP synthase F(0) complex subunit 8 (54 aa).

Residues 13-35 (ALSLWVCFPLMMLSLSSFLPLTL) form a helical membrane-spanning segment.

This sequence belongs to the ATPase protein 8 family. Component of the ATP synthase complex composed at least of ATP5F1A/subunit alpha, ATP5F1B/subunit beta, ATP5MC1/subunit c (homooctomer), MT-ATP6/subunit a, MT-ATP8/subunit 8, ATP5ME/subunit e, ATP5MF/subunit f, ATP5MG/subunit g, ATP5MK/subunit k, ATP5MJ/subunit j, ATP5F1C/subunit gamma, ATP5F1D/subunit delta, ATP5F1E/subunit epsilon, ATP5PF/subunit F6, ATP5PB/subunit b, ATP5PD/subunit d, ATP5PO/subunit OSCP. ATP synthase complex consists of a soluble F(1) head domain (subunits alpha(3) and beta(3)) - the catalytic core - and a membrane F(0) domain - the membrane proton channel (subunits c, a, 8, e, f, g, k and j). These two domains are linked by a central stalk (subunits gamma, delta, and epsilon) rotating inside the F1 region and a stationary peripheral stalk (subunits F6, b, d, and OSCP).

The protein localises to the mitochondrion membrane. Subunit 8, of the mitochondrial membrane ATP synthase complex (F(1)F(0) ATP synthase or Complex V) that produces ATP from ADP in the presence of a proton gradient across the membrane which is generated by electron transport complexes of the respiratory chain. ATP synthase complex consist of a soluble F(1) head domain - the catalytic core - and a membrane F(1) domain - the membrane proton channel. These two domains are linked by a central stalk rotating inside the F(1) region and a stationary peripheral stalk. During catalysis, ATP synthesis in the catalytic domain of F(1) is coupled via a rotary mechanism of the central stalk subunits to proton translocation. In vivo, can only synthesize ATP although its ATP hydrolase activity can be activated artificially in vitro. Part of the complex F(0) domain. The sequence is that of ATP synthase F(0) complex subunit 8 from Myxine glutinosa (Atlantic hagfish).